We begin with the raw amino-acid sequence, 87 residues long: Cell division protein FtsL (87 aa).

Topologically, residues 1–6 (MNKSNF) are cytoplasmic. Residues 7-23 (FLLLAVCVSAFSVVMQQ) form a helical membrane-spanning segment. Over 24–87 (NQYRLNFTAL…GNTFMVEHQR (64 aa)) the chain is Periplasmic. Residues 31 to 71 (TALDKAKKQEIALEQDYAQMRLQQARLANHEAIRAAAEKQN) are a coiled coil. The interval 68 to 87 (EKQNLHPPVSGNTFMVEHQR) is disordered.

The protein belongs to the FtsL family. In terms of assembly, part of a complex composed of FtsB, FtsL and FtsQ.

Its subcellular location is the cell inner membrane. In terms of biological role, essential cell division protein. May link together the upstream cell division proteins, which are predominantly cytoplasmic, with the downstream cell division proteins, which are predominantly periplasmic. The protein is Cell division protein FtsL of Neisseria gonorrhoeae (strain ATCC 700825 / FA 1090).